Here is a 136-residue protein sequence, read N- to C-terminus: Large-conductance mechanosensitive channel (136 aa).

The next 2 helical transmembrane spans lie at 10–30 and 76–96; these read FAMR…AAFG and GVFI…FMAI.

It belongs to the MscL family. Homopentamer.

The protein resides in the cell inner membrane. Its function is as follows. Channel that opens in response to stretch forces in the membrane lipid bilayer. May participate in the regulation of osmotic pressure changes within the cell. The chain is Large-conductance mechanosensitive channel from Escherichia coli O127:H6 (strain E2348/69 / EPEC).